A 454-amino-acid chain; its full sequence is Bifunctional protein GlmU (454 aa).

The pyrophosphorylase stretch occupies residues 1–226; sequence MALNVVILAA…AIEVEGANNR (226 aa). UDP-N-acetyl-alpha-D-glucosamine is bound by residues 8-11, lysine 22, glutamine 73, 78-79, 100-102, glycine 137, glutamate 151, asparagine 166, and asparagine 224; these read LAAG, GT, and YGD. Aspartate 102 lines the Mg(2+) pocket. Residue asparagine 224 participates in Mg(2+) binding. The linker stretch occupies residues 227–247; it reads VQLAQLERAYQAREAEKLMIA. Residues 248 to 454 form an N-acetyltransferase region; that stretch reads GANLRDPSRI…GWQRPVKIKK (207 aa). Residues arginine 330 and lysine 348 each contribute to the UDP-N-acetyl-alpha-D-glucosamine site. Histidine 360 functions as the Proton acceptor in the catalytic mechanism. UDP-N-acetyl-alpha-D-glucosamine contacts are provided by tyrosine 363 and asparagine 374. Acetyl-CoA-binding positions include alanine 377, 383-384, serine 402, alanine 420, and arginine 437; that span reads NY.

This sequence in the N-terminal section; belongs to the N-acetylglucosamine-1-phosphate uridyltransferase family. It in the C-terminal section; belongs to the transferase hexapeptide repeat family. As to quaternary structure, homotrimer. Requires Mg(2+) as cofactor.

It localises to the cytoplasm. The catalysed reaction is alpha-D-glucosamine 1-phosphate + acetyl-CoA = N-acetyl-alpha-D-glucosamine 1-phosphate + CoA + H(+). It catalyses the reaction N-acetyl-alpha-D-glucosamine 1-phosphate + UTP + H(+) = UDP-N-acetyl-alpha-D-glucosamine + diphosphate. It participates in nucleotide-sugar biosynthesis; UDP-N-acetyl-alpha-D-glucosamine biosynthesis; N-acetyl-alpha-D-glucosamine 1-phosphate from alpha-D-glucosamine 6-phosphate (route II): step 2/2. Its pathway is nucleotide-sugar biosynthesis; UDP-N-acetyl-alpha-D-glucosamine biosynthesis; UDP-N-acetyl-alpha-D-glucosamine from N-acetyl-alpha-D-glucosamine 1-phosphate: step 1/1. The protein operates within bacterial outer membrane biogenesis; LPS lipid A biosynthesis. Catalyzes the last two sequential reactions in the de novo biosynthetic pathway for UDP-N-acetylglucosamine (UDP-GlcNAc). The C-terminal domain catalyzes the transfer of acetyl group from acetyl coenzyme A to glucosamine-1-phosphate (GlcN-1-P) to produce N-acetylglucosamine-1-phosphate (GlcNAc-1-P), which is converted into UDP-GlcNAc by the transfer of uridine 5-monophosphate (from uridine 5-triphosphate), a reaction catalyzed by the N-terminal domain. The chain is Bifunctional protein GlmU from Shewanella oneidensis (strain ATCC 700550 / JCM 31522 / CIP 106686 / LMG 19005 / NCIMB 14063 / MR-1).